A 233-amino-acid polypeptide reads, in one-letter code: Cytochrome c biogenesis ATP-binding export protein CcmA (233 aa).

In terms of domain architecture, ABC transporter spans 17-233; sequence FAGEDLLCVR…AAGLFLEDEG (217 aa). 49–56 lines the ATP pocket; sequence GPNGSGKS.

Belongs to the ABC transporter superfamily. CcmA exporter (TC 3.A.1.107) family. In terms of assembly, the complex is composed of two ATP-binding proteins (CcmA) and two transmembrane proteins (CcmB).

The protein localises to the cell inner membrane. It carries out the reaction heme b(in) + ATP + H2O = heme b(out) + ADP + phosphate + H(+). In terms of biological role, part of the ABC transporter complex CcmAB involved in the biogenesis of c-type cytochromes; once thought to export heme, this seems not to be the case, but its exact role is uncertain. Responsible for energy coupling to the transport system. In Rhodospirillum rubrum (strain ATCC 11170 / ATH 1.1.1 / DSM 467 / LMG 4362 / NCIMB 8255 / S1), this protein is Cytochrome c biogenesis ATP-binding export protein CcmA.